We begin with the raw amino-acid sequence, 144 residues long: Large ribosomal subunit protein uL15 (144 aa).

The tract at residues 1 to 54 (MRLNTIKPGEGSKKTAKRVGRGIGSGLGKTCGRGHKGQKSRSGGFHKVGFEGGQ) is disordered. Residues 21-31 (RGIGSGLGKTC) show a composition bias toward gly residues.

This sequence belongs to the universal ribosomal protein uL15 family. Part of the 50S ribosomal subunit.

Functionally, binds to the 23S rRNA. This Dechloromonas aromatica (strain RCB) protein is Large ribosomal subunit protein uL15.